The chain runs to 89 residues: Small ribosomal subunit protein uS19 (89 aa).

Belongs to the universal ribosomal protein uS19 family.

Its function is as follows. Protein S19 forms a complex with S13 that binds strongly to the 16S ribosomal RNA. The polypeptide is Small ribosomal subunit protein uS19 (Stenotrophomonas maltophilia (strain R551-3)).